The sequence spans 340 residues: Coproporphyrin III ferrochelatase (340 aa).

Residues serine 52 and tyrosine 121 each contribute to the Fe-coproporphyrin III site. Fe(2+)-binding residues include histidine 181 and glutamate 264.

Belongs to the ferrochelatase family.

It localises to the cytoplasm. It carries out the reaction Fe-coproporphyrin III + 2 H(+) = coproporphyrin III + Fe(2+). It participates in porphyrin-containing compound metabolism; protoheme biosynthesis. Functionally, involved in coproporphyrin-dependent heme b biosynthesis. Catalyzes the insertion of ferrous iron into coproporphyrin III to form Fe-coproporphyrin III. This is Coproporphyrin III ferrochelatase from Mycolicibacterium smegmatis (strain ATCC 700084 / mc(2)155) (Mycobacterium smegmatis).